Here is a 489-residue protein sequence, read N- to C-terminus: Endoglucanase 4 (489 aa).

The N-terminal stretch at methionine 1 to alanine 25 is a signal peptide. The active-site Nucleophile is the aspartate 81. The active site involves histidine 409. A glycan (N-linked (GlcNAc...) asparagine) is linked at asparagine 453. Catalysis depends on residues aspartate 460 and glutamate 469.

Belongs to the glycosyl hydrolase 9 (cellulase E) family.

It is found in the secreted. It carries out the reaction Endohydrolysis of (1-&gt;4)-beta-D-glucosidic linkages in cellulose, lichenin and cereal beta-D-glucans.. The chain is Endoglucanase 4 from Arabidopsis thaliana (Mouse-ear cress).